Here is a 253-residue protein sequence, read N- to C-terminus: HTH-type transcriptional regulator YdeO (253 aa).

Residues Gly137 to Glu233 enclose the HTH araC/xylS-type domain. DNA-binding regions (H-T-H motif) lie at residues Lys154–Gln175 and Val200–Phe223.

Its function is as follows. Induces the expression of gadE and mdtEF. Could also regulate the expression of other genes involved in acid resistance. The polypeptide is HTH-type transcriptional regulator YdeO (ydeO) (Escherichia coli (strain K12)).